Reading from the N-terminus, the 962-residue chain is MSYKNYYTWKYPDIPEHVAPLLLELQNSLVIVGIIGRSKCAQANKMSAFGMQPDKTHEPADGQILCYYKPGTNMLLLHFETTHDEAVLGQQLLKQTSVDFDSFYEQMRSRFLRMLLLALHVCHILVYVETAQTFDTTLVTICQLLKYVREKHVLDFLPQMLRETAAGSLLSDRARLCTPRVLFLFENYPQDEEKSRERISAYEFQTEDKIYELLRQYNIVTNNANNSLFALPNNKQFVFYNAHEKLRPDQLLLAIEALNATMYKSDSKEEEEDTEILELAPFEGFVKPYGAGYEARESDEQLYRKKHTVWHFLQRHVQDALQGCFDEGSFKQLPQSAQFQLLGVNDWHICMDTIHRLLIGNIQEVSYVTNNQNYKAYLRDFNESLNYEKKFWGHLCDLGLKKGISAYKSSAPAIYGSVTHRQLLADAILAFEEEGRGPYAELALAKLSEICLRHWHDGRQQCEQLSLRGNPCTQPKDAPHDKHSSGIVHISSCNCGRTQGRREDPFTLRQANYDYYEHMAAMCNLCVKVKKFQLPVFTPSISDYRAAAFEAAFPLLLQAAKNRTEIATGGDSDLEAAGELYSQPINATEQAPQKPQITLSNGCSQPALSATYGSDLNMSIAGFGASLNEGEEVRSPEISSQIASSGLSSRSNSTSSGTSSANTANELVLQLKERTDQNAANAAVSEICPEALPIVASTEQVSTTEYLPGLVHMSSGCELLPLFPSWSLACVGPSSIYSHNTGLQEHFQSGFLSGANFLLPWDVHVRLVQPHKHPQQQQQSMGKKSQRYRKHGDRLALKIFVGFEYECSRGHRFMMCSPDRVLRGGADIERDTSSKVVNNNMPLYFPCPCRAQPTYLAQLMRIHVVTPKAPVNIILDPKMCVGKYTFTLGCPTLPRLSQSAYWILRLPYVYQGDNVLITPPERLEPDDNMASGCLLAGMFGIAETDTNETNQQAITPLTFTRL.

Positions 634–661 (RSPEISSQIASSGLSSRSNSTSSGTSSA) are disordered. Residues 639–661 (SSQIASSGLSSRSNSTSSGTSSA) show a composition bias toward low complexity.

It belongs to the SMG8 family.

Its function is as follows. Involved in nonsense-mediated decay (NMD) of mRNAs containing premature stop codons. Probable component of kinase complex containing nonC and recruited to stalled ribosomes. The chain is Nonsense-mediated mRNA decay factor SMG8 from Drosophila virilis (Fruit fly).